Consider the following 296-residue polypeptide: Methylsterol monooxygenase 1 (296 aa).

The next 2 helical transmembrane spans lie at 55 to 75 and 100 to 120; these read LLVH…FQFI and TLIF…YYFT. In terms of domain architecture, Fatty acid hydroxylase spans 145–274; sequence CAVIEDAWHY…FTWWDRIFGT (130 aa). Residues 157 to 161 carry the Histidine box-1 motif; that stretch reads HRLLH. The Histidine box-2 signature appears at 170–174; it reads HKVHH. Residues 199–219 traverse the membrane as a helical segment; sequence FFIGIVVFCNHVVLLWAWVIC. The Histidine box-3 signature appears at 249–255; that stretch reads FHDFHHM.

The protein belongs to the sterol desaturase family. It depends on Fe cation as a cofactor.

The protein localises to the endoplasmic reticulum membrane. It catalyses the reaction 4,4-dimethyl-5alpha-cholest-7-en-3beta-ol + 6 Fe(II)-[cytochrome b5] + 3 O2 + 5 H(+) = 4alpha-carboxy-4beta-methyl-5alpha-cholest-7-ene-3beta-ol + 6 Fe(III)-[cytochrome b5] + 4 H2O. It functions in the pathway steroid biosynthesis; zymosterol biosynthesis; zymosterol from lanosterol: step 3/6. In terms of biological role, catalyzes the first step in the removal of the two C-4 methyl groups of 4,4-dimethylzymosterol. The sequence is that of Methylsterol monooxygenase 1 (MSMO1) from Gallus gallus (Chicken).